The following is a 110-amino-acid chain: Large ribosomal subunit protein uL22 (110 aa).

The protein belongs to the universal ribosomal protein uL22 family. In terms of assembly, part of the 50S ribosomal subunit.

This protein binds specifically to 23S rRNA; its binding is stimulated by other ribosomal proteins, e.g. L4, L17, and L20. It is important during the early stages of 50S assembly. It makes multiple contacts with different domains of the 23S rRNA in the assembled 50S subunit and ribosome. In terms of biological role, the globular domain of the protein is located near the polypeptide exit tunnel on the outside of the subunit, while an extended beta-hairpin is found that lines the wall of the exit tunnel in the center of the 70S ribosome. The sequence is that of Large ribosomal subunit protein uL22 from Haemophilus influenzae (strain 86-028NP).